The sequence spans 629 residues: Pumilio homolog 3 (629 aa).

Composition is skewed to basic residues over residues 1-10 (MEGKPRKKSF) and 18-37 (PSFK…RPFK). A disordered region spans residues 1–92 (MEGKPRKKSF…EGDERKKPKW (92 aa)). Residues 62–92 (KPTDGKFAKKRKFPGDRIKQEEGDERKKPKW) are compositionally biased toward basic and acidic residues. The Nuclear localization signal signature appears at 88 to 100 (KKPKWDEFKQKKK). Positions 120–473 (RAKQVWEMVR…ELLEAASPSL (354 aa)) constitute a PUM-HD domain. 11 Pumilio repeats span residues 160 to 195 (HDST…LSKS), 196 to 231 (KYAR…MLRH), 232 to 260 (SEAS…ELYG), 272 to 308 (PTLE…VIKH), 309 to 344 (SLVH…MAHT), 345 to 380 (HDGA…FAMG), 381 to 418 (EYAH…IISN), 419 to 487 (KHGK…MVMD), 488 to 534 (KSCC…MAEH), 535 to 579 (PAGH…WASV), and 580 to 618 (NRGA…LQNS).

In adult, expressed at high levels in eye and ovary and at lower levels in brain, testis and head kidney. In the adult ovary, prominently expressed in early immature follicles.

Its subcellular location is the nucleus. It is found in the nucleolus. It localises to the nucleoplasm. The protein resides in the chromosome. Its function is as follows. Inhibits the poly(ADP-ribosyl)ation activity of PARP1 and the degradation of PARP1 by CASP3 following genotoxic stress. Binds to double-stranded RNA or DNA without sequence specificity. Involved in development of the eye and of primordial germ cells. The chain is Pumilio homolog 3 (pum3) from Danio rerio (Zebrafish).